The chain runs to 292 residues: Short chain dehydrogenase mpl6 (292 aa).

The NADP(+) site is built by V37, D95, N122, R156, Y188, K192, V221, and T223. Y188 serves as the catalytic Proton donor. The Lowers pKa of active site Tyr role is filled by K192.

It belongs to the short-chain dehydrogenases/reductases (SDR) family.

The protein operates within mycotoxin biosynthesis. Functionally, short chain dehydrogenase; part of the gene cluster that mediates the biosynthesis of the mycotoxin citrinin, a hepato-nephrotoxic compound to humans due to inhibition of respiration complex III. The pathway begins with the synthesis of a keto-aldehyde intermediate by the citrinin PKS (pksCT) from successive condensations of 4 malonyl-CoA units, presumably with a simple acetyl-CoA starter unit. Release of the keto-aldehyde intermediate is consistent with the presence of the C-terminal reductive release domain. Mp11 collaborates with pksCT by catalyzing the hydrolysis of ACP-bound acyl intermediates to free the ACP from stalled intermediates. Mpl2 then catalyzes the oxidation of the C-12 methyl of the ketone intermediate to an alcohol intermediate which is further oxidized by the oxidoreductase mpl7 to produce a bisaldehyde intermediate. The fourth catalytic step is catalyzed by the mpl4 aldehyde dehydrogenase. The final transformation is the reduction of C-3 by mpl6 to provide the chemically stable citrinin nucleus. The sequence is that of Short chain dehydrogenase mpl6 from Monascus purpureus (Red mold).